Consider the following 261-residue polypeptide: Phosphonates import ATP-binding protein PhnC (261 aa).

The ABC transporter domain occupies 8-253 (LRVENLSKTY…WFRRIYGEGA (246 aa)). An ATP-binding site is contributed by 41 to 48 (GLSGSGKS).

Belongs to the ABC transporter superfamily. Phosphonates importer (TC 3.A.1.9.1) family. As to quaternary structure, the complex is composed of two ATP-binding proteins (PhnC), two transmembrane proteins (PhnE) and a solute-binding protein (PhnD).

The protein localises to the cell inner membrane. The catalysed reaction is phosphonate(out) + ATP + H2O = phosphonate(in) + ADP + phosphate + H(+). In terms of biological role, part of the ABC transporter complex PhnCDE involved in phosphonates import. Responsible for energy coupling to the transport system. The chain is Phosphonates import ATP-binding protein PhnC from Bdellovibrio bacteriovorus (strain ATCC 15356 / DSM 50701 / NCIMB 9529 / HD100).